A 415-amino-acid polypeptide reads, in one-letter code: Fructose-like permease IIC component (415 aa).

The Cytoplasmic segment spans residues 1 to 46 (MAIKKRSATVVHGASGAAAAVKNPQASKSSFWGELPQHVMSGISRM). A PTS EIIC type-2 domain is found at 35 to 415 (LPQHVMSGIS…RKGKLLIESL (381 aa)). A helical membrane pass occupies residues 47 to 67 (VPTLIMGGVILAFSQLIAYSW). The Periplasmic segment spans residues 68–101 (LKIPADIGIMDALNSGKFSGFDLSLLKFAWLSQS). Residues 102 to 122 (FGGVLFGFAIPMFAAFVANSI) traverse the membrane as a helical segment. Residues 123-126 (GGKL) are Cytoplasmic-facing. The chain crosses the membrane as a helical span at residues 127–147 (AFPAGFIGGLMSTQPTQLLNF). Over 148-157 (DPSTMQWATS) the chain is Periplasmic. A helical transmembrane segment spans residues 158–178 (SPVPSTFIGALIISIVAGYLV). The Cytoplasmic segment spans residues 179–197 (KWMNQKIQLPDFLLAFKTT). The chain crosses the membrane as a helical span at residues 198–218 (FLLPILSAIFVMLAMYYVITP). Topologically, residues 219-237 (FGGWINGGIRTVLTAAGEK) are periplasmic. The helical transmembrane segment at 238 to 258 (GALMYAMGIAAATAIDLGGPI) threads the bilayer. The Cytoplasmic segment spans residues 259 to 276 (NKAAGFVAFSFTTDHVLP). A helical membrane pass occupies residues 277–297 (VTARSIAIVIPPIGLGLATII). Residues 298 to 318 (DRRLTGKRLFNAQLYPQGKTA) are Periplasmic-facing. Residues 319-339 (MFLAFMGISEGAIPFALESPI) form a helical membrane-spanning segment. The Cytoplasmic segment spans residues 340 to 341 (TA). A helical transmembrane segment spans residues 342–362 (IPSYMVGAIVGSTAAVWLGAV). Topologically, residues 363 to 378 (QWFPESAIWAWPLVTN) are periplasmic. A helical transmembrane segment spans residues 379-399 (LGVYMAGIALGAIITALMVVF). The Cytoplasmic portion of the chain corresponds to 400 to 415 (LRLMMFRKGKLLIESL).

Its subcellular location is the cell inner membrane. The phosphoenolpyruvate-dependent sugar phosphotransferase system (PTS), a major carbohydrate active -transport system, catalyzes the phosphorylation of incoming sugar substrates concomitant with their translocation across the cell membrane. In Escherichia coli O6:H1 (strain CFT073 / ATCC 700928 / UPEC), this protein is Fructose-like permease IIC component (fryC).